The chain runs to 406 residues: Putative cyclin-F3-2 (406 aa).

The tract at residues 1-107 is disordered; sequence MARPRTRSVA…PGAAGGPWQL (107 aa). Low complexity-rich tracts occupy residues 11–21 and 29–57; these read RMEATAAAAAA and NPDG…NAGE.

This sequence belongs to the cyclin family. Cyclin F subfamily.

The protein is Putative cyclin-F3-2 (CYCF3-2) of Oryza sativa subsp. japonica (Rice).